A 354-amino-acid polypeptide reads, in one-letter code: Protein-glutamate methylesterase/protein-glutamine glutaminase of group 3 operon (354 aa).

One can recognise a Response regulatory domain in the interval 3 to 121 (RILLATSTVE…MQLEQPAIEK (119 aa)). One can recognise a CheB-type methylesterase domain in the interval 158–340 (PIGIVGIAAS…LESIAENITA (183 aa)). Residues S167, H194, and D287 contribute to the active site.

The protein belongs to the CheB family.

The protein resides in the cytoplasm. It catalyses the reaction [protein]-L-glutamate 5-O-methyl ester + H2O = L-glutamyl-[protein] + methanol + H(+). The enzyme catalyses L-glutaminyl-[protein] + H2O = L-glutamyl-[protein] + NH4(+). In terms of biological role, involved in chemotaxis. Part of a chemotaxis signal transduction system that modulates chemotaxis in response to various stimuli. Catalyzes the demethylation of specific methylglutamate residues introduced into the chemoreceptors (methyl-accepting chemotaxis proteins or MCP) by CheR. Also mediates the irreversible deamidation of specific glutamine residues to glutamic acid. This Rhizobium meliloti (strain 1021) (Ensifer meliloti) protein is Protein-glutamate methylesterase/protein-glutamine glutaminase of group 3 operon.